A 500-amino-acid chain; its full sequence is MAFPRFLSLLAVVTLSLFLTTTDASSRSLSTPPKTNVLDVVSSLQQTQTILSLDPTRSSLTTTKPESLSDPVFFNSSSPLSLELHSRDTFVASQHKDYKSLTLSRLERDSSRVAGIVAKIRFAVEGVDRSDLKPVYNEDTRYQTEDLTTPVVSGASQGSGEYFSRIGVGTPAKEMYLVLDTGSDVNWIQCEPCADCYQQSDPVFNPTSSSTYKSLTCSAPQCSLLETSACRSNKCLYQVSYGDGSFTVGELATDTVTFGNSGKINNVALGCGHDNEGLFTGAAGLLGLGGGVLSITNQMKATSFSYCLVDRDSGKSSSLDFNSVQLGGGDATAPLLRNKKIDTFYYVGLSGFSVGGEKVVLPDAIFDVDASGSGGVILDCGTAVTRLQTQAYNSLRDAFLKLTVNLKKGSSSISLFDTCYDFSSLSTVKVPTVAFHFTGGKSLDLPAKNYLIPVDDSGTFCFAFAPTSSSLSIIGNVQQQGTRITYDLSKNVIGLSGNKC.

The first 24 residues, 1–24 (MAFPRFLSLLAVVTLSLFLTTTDA), serve as a signal peptide directing secretion. One can recognise a Peptidase A1 domain in the interval 162-496 (YFSRIGVGTP…DLSKNVIGLS (335 aa)). The active site involves aspartate 180. 6 disulfide bridges follow: cysteine 190/cysteine 193, cysteine 196/cysteine 271, cysteine 217/cysteine 235, cysteine 222/cysteine 230, cysteine 307/cysteine 500, and cysteine 419/cysteine 461. Aspartate 379 is an active-site residue.

Belongs to the peptidase A1 family. In terms of tissue distribution, expressed in young seedlings, leaves, guard-cells, stems, flowers and siliques, but not in roots or mesophyll cells.

The protein resides in the endoplasmic reticulum. Its activity is regulated as follows. Inhibited by pepstatin A. Aspartic protease involved in drought avoidance through abscisic acid signaling. The protein is Protein ASPARTIC PROTEASE IN GUARD CELL 1 (ASPG1) of Arabidopsis thaliana (Mouse-ear cress).